Consider the following 122-residue polypeptide: MIQQQTTLKVADNSGARGIMCIKVLGGSNRRYANIGDIIVASVKSATPGGVVKKGEVVKAVVVRSKKGVRRADGSYIKFDENAAVIIKDDKQPKGTRIFGPVARELRDKEFNKILSLAPEVL.

The protein belongs to the universal ribosomal protein uL14 family. As to quaternary structure, part of the 50S ribosomal subunit. Forms a cluster with proteins L3 and L19. In the 70S ribosome, L14 and L19 interact and together make contacts with the 16S rRNA in bridges B5 and B8.

Binds to 23S rRNA. Forms part of two intersubunit bridges in the 70S ribosome. In Clostridium tetani (strain Massachusetts / E88), this protein is Large ribosomal subunit protein uL14.